A 1431-amino-acid chain; its full sequence is Probable serine/threonine-protein kinase irlA (1431 aa).

Positions 1 to 10 (MTKPIFKSKT) are enriched in basic residues. Disordered stretches follow at residues 1–81 (MTKP…EKEE) and 736–879 (KREK…NNNK). A compositionally biased stretch (acidic residues) spans 25 to 43 (NEDEEEEEGGEEGGEEEEI). Positions 46–67 (NKNSNNSSSNSNNNNNDNNNNN) are enriched in low complexity. Coiled coils occupy residues 57-97 (NNNN…LDME) and 715-759 (KKRS…NNNN). Residues 68–81 (GEERKVEKEEEKEE) show a composition bias toward basic and acidic residues. Basic residues predominate over residues 738 to 749 (EKKKQKDKKKNK). Over residues 750–776 (SNQNQKNNNNQNNQSNNNKINSPSSNK) the composition is skewed to low complexity. Positions 777–791 (LTQNVTPPSSPVNII) are enriched in polar residues. The segment covering 792-812 (TSSSTTSSSTSSTTSSTTSST) has biased composition (low complexity). Positions 821 to 838 (TLPIKTSSPTKPESQKPS) are enriched in polar residues. Residues 854–878 (NNNNNNNNNNNNNNNNNNNNNNNNN) show a composition bias toward low complexity. Residues 860 to 971 (NNNNNNNNNN…QESIQLNQTL (112 aa)) adopt a coiled-coil conformation. In terms of domain architecture, Protein kinase spans 987-1261 (RDENNIIGRG…IDTILNHPLF (275 aa)). ATP is bound by residues 993–1001 (IGRGSNGTL) and lysine 1016. Aspartate 1130 functions as the Proton acceptor in the catalytic mechanism. Residues 1264 to 1431 (TNEKIKFYES…NSKDYLNIKF (168 aa)) enclose the KEN domain.

This sequence belongs to the protein kinase superfamily. Ser/Thr protein kinase family.

It carries out the reaction L-seryl-[protein] + ATP = O-phospho-L-seryl-[protein] + ADP + H(+). It catalyses the reaction L-threonyl-[protein] + ATP = O-phospho-L-threonyl-[protein] + ADP + H(+). The chain is Probable serine/threonine-protein kinase irlA (irlA) from Dictyostelium discoideum (Social amoeba).